A 246-amino-acid chain; its full sequence is Probable transcriptional regulatory protein HD_0596 (246 aa).

The protein belongs to the TACO1 family.

Its subcellular location is the cytoplasm. In Haemophilus ducreyi (strain 35000HP / ATCC 700724), this protein is Probable transcriptional regulatory protein HD_0596.